Consider the following 657-residue polypeptide: Glycogen debranching enzyme (657 aa).

The Nucleophile role is filled by Asp-336. Glu-371 (proton donor) is an active-site residue. The segment at 460 to 479 (ANGEENRDGTNNNYSNNHGK) is disordered.

It belongs to the glycosyl hydrolase 13 family.

It catalyses the reaction Hydrolysis of (1-&gt;6)-alpha-D-glucosidic linkages to branches with degrees of polymerization of three or four glucose residues in limit dextrin.. It functions in the pathway glycan degradation; glycogen degradation. Its function is as follows. Removes maltotriose and maltotetraose chains that are attached by 1,6-alpha-linkage to the limit dextrin main chain, generating a debranched limit dextrin. This chain is Glycogen debranching enzyme, found in Shigella flexneri serotype 5b (strain 8401).